The sequence spans 361 residues: Polyribonucleotide 5'-hydroxyl-kinase PH0197 (361 aa).

An ATP-binding site is contributed by 43-50 (GDVDTGKT).

A divalent metal cation is required as a cofactor.

The catalysed reaction is a 5'-end dephospho-2'-deoxyribonucleoside-DNA + ATP = a 5'-end 5'-phospho-2'-deoxyribonucleoside-DNA + ADP + H(+). It carries out the reaction a 5'-end dephospho-ribonucleoside-RNA + ATP = a 5'-end 5'-phospho-ribonucleoside-RNA + ADP + H(+). With respect to regulation, DNA kinase activity is inhibited by 250 mM sodium chloride whereas RNA kinase activity is unaffected. Functionally, polynucleotide kinase that can phosphorylate the 5'-hydroxyl groups of both single-stranded RNA (ssRNA) and single-stranded DNA (ssDNA). Exhibits a strong preference for ssRNA. The chain is Polyribonucleotide 5'-hydroxyl-kinase PH0197 from Pyrococcus horikoshii (strain ATCC 700860 / DSM 12428 / JCM 9974 / NBRC 100139 / OT-3).